The primary structure comprises 237 residues: Sugar fermentation stimulation protein homolog (237 aa).

It belongs to the SfsA family.

In Pseudomonas putida (strain GB-1), this protein is Sugar fermentation stimulation protein homolog.